Reading from the N-terminus, the 657-residue chain is Glycogen debranching enzyme (657 aa).

Residue Asp-336 is the Nucleophile of the active site. Catalysis depends on Glu-371, which acts as the Proton donor. The span at 458-467 (NEANGEENRD) shows a compositional bias: basic and acidic residues. Residues 458–479 (NEANGEENRDGTNNNYSNNHGK) are disordered.

Belongs to the glycosyl hydrolase 13 family.

It catalyses the reaction Hydrolysis of (1-&gt;6)-alpha-D-glucosidic linkages to branches with degrees of polymerization of three or four glucose residues in limit dextrin.. The protein operates within glycan degradation; glycogen degradation. In terms of biological role, removes maltotriose and maltotetraose chains that are attached by 1,6-alpha-linkage to the limit dextrin main chain, generating a debranched limit dextrin. The polypeptide is Glycogen debranching enzyme (Escherichia coli (strain 55989 / EAEC)).